A 519-amino-acid chain; its full sequence is Protein M35 (519 aa).

Residues 485 to 519 are disordered; that stretch reads PVRPIRGGGQRMANMRGARPYSTVQRGRRRHESEV. A compositionally biased stretch (basic residues) spans 510-519; it reads RGRRRHESEV.

It localises to the host nucleus. Functionally, plays a role in the inhibition of host type I interferon production within the host nucleus. Targets specifically the NF-kappa-B-mediated interferon-beta transcription. The sequence is that of Protein M35 (M35) from Mus musculus (Mouse).